We begin with the raw amino-acid sequence, 993 residues long: UPF0182 protein MAP_3291c (993 aa).

7 helical membrane passes run 18–38, 63–83, 113–133, 175–195, 210–230, 254–274, and 287–307; these read ILIL…RLID, FVVF…GLAV, LVSV…AQSY, FVAV…FGGI, IQLV…YWLD, AVLP…AAVF, and IGLV…PLIV. Positions 903–941 are disordered; it reads NIQPTEGGAPAASPPANAPAPAVTPGSAPPVAAPPVPDG. Residues 929–939 show a composition bias toward pro residues; it reads SAPPVAAPPVP.

It belongs to the UPF0182 family.

Its subcellular location is the cell membrane. The protein is UPF0182 protein MAP_3291c of Mycolicibacterium paratuberculosis (strain ATCC BAA-968 / K-10) (Mycobacterium paratuberculosis).